Here is a 161-residue protein sequence, read N- to C-terminus: Allophycocyanin subunit alpha-B (161 aa).

N71 bears the N4-methylasparagine mark. C81 is a binding site for (2R,3E)-phycocyanobilin.

It belongs to the phycobiliprotein family. In terms of assembly, heterohexamer of two alpha chains, one alpha-B chain and three beta chains. In terms of processing, contains one covalently linked phycocyanobilin chromophore. The chromophore is added by phycocyanobilin lyase CpcS 1.

The protein resides in the cellular thylakoid membrane. Functionally, light-harvesting photosynthetic bile pigment-protein from the phycobiliprotein complex. Allophycocyanin has a maximum absorption at approximately 654 nanometers. The chain is Allophycocyanin subunit alpha-B (apcD) from Nostoc sp. (strain PCC 7120 / SAG 25.82 / UTEX 2576).